A 122-amino-acid polypeptide reads, in one-letter code: Large ribosomal subunit protein uL14 (122 aa).

Belongs to the universal ribosomal protein uL14 family. Part of the 50S ribosomal subunit. Forms a cluster with proteins L3 and L19. In the 70S ribosome, L14 and L19 interact and together make contacts with the 16S rRNA in bridges B5 and B8.

Functionally, binds to 23S rRNA. Forms part of two intersubunit bridges in the 70S ribosome. This chain is Large ribosomal subunit protein uL14, found in Corynebacterium aurimucosum (strain ATCC 700975 / DSM 44827 / CIP 107346 / CN-1) (Corynebacterium nigricans).